Consider the following 55-residue polypeptide: UPF0391 membrane protein Tbd_2772 (55 aa).

A run of 2 helical transmembrane segments spans residues 1-21 (MFGW…FGFA) and 28-48 (AWIA…MLVM).

The protein belongs to the UPF0391 family.

The protein localises to the cell membrane. The protein is UPF0391 membrane protein Tbd_2772 of Thiobacillus denitrificans (strain ATCC 25259 / T1).